Consider the following 326-residue polypeptide: ATP synthase subunit gamma, mitochondrial (326 aa).

A mitochondrion-targeting transit peptide spans 1-45 (MAMAALRREGRRLAAAPFTSPTPLNALRSSLVSPSEEIGLSGVRS).

Belongs to the ATPase gamma chain family. F-type ATPases have 2 components, CF(1) - the catalytic core - and CF(0) - the membrane proton channel. CF(1) has five subunits: alpha(3), beta(3), gamma(1), delta(1), epsilon(1). CF(0) has three main subunits: a, b and c.

It is found in the mitochondrion. Its subcellular location is the mitochondrion inner membrane. Its function is as follows. Mitochondrial membrane ATP synthase (F(1)F(0) ATP synthase or Complex V) produces ATP from ADP in the presence of a proton gradient across the membrane which is generated by electron transport complexes of the respiratory chain. F-type ATPases consist of two structural domains, F(1) - containing the extramembraneous catalytic core, and F(0) - containing the membrane proton channel, linked together by a central stalk and a peripheral stalk. During catalysis, ATP synthesis in the catalytic domain of F(1) is coupled via a rotary mechanism of the central stalk subunits to proton translocation. Part of the complex F(1) domain and the central stalk which is part of the complex rotary element. The gamma subunit protrudes into the catalytic domain formed of alpha(3)beta(3). Rotation of the central stalk against the surrounding alpha(3)beta(3) subunits leads to hydrolysis of ATP in three separate catalytic sites on the beta subunits. This is ATP synthase subunit gamma, mitochondrial (ATPC) from Ipomoea batatas (Sweet potato).